Consider the following 547-residue polypeptide: Chaperonin GroEL (547 aa).

ATP-binding positions include 30–33, K51, 87–91, G415, 479–481, and D495; these read TLGP, DGTTT, and NAA. The disordered stretch occupies residues 524–547; that stretch reads APKKDEPTPPAAGGGMGGMGGMDF. Gly residues predominate over residues 535-547; that stretch reads AGGGMGGMGGMDF.

It belongs to the chaperonin (HSP60) family. As to quaternary structure, forms a cylinder of 14 subunits composed of two heptameric rings stacked back-to-back. Interacts with the co-chaperonin GroES.

It localises to the cytoplasm. It catalyses the reaction ATP + H2O + a folded polypeptide = ADP + phosphate + an unfolded polypeptide.. Functionally, together with its co-chaperonin GroES, plays an essential role in assisting protein folding. The GroEL-GroES system forms a nano-cage that allows encapsulation of the non-native substrate proteins and provides a physical environment optimized to promote and accelerate protein folding. This is Chaperonin GroEL from Xylella fastidiosa (strain 9a5c).